Reading from the N-terminus, the 309-residue chain is Porphobilinogen deaminase (309 aa).

Residue cysteine 242 is modified to S-(dipyrrolylmethanemethyl)cysteine.

The protein belongs to the HMBS family. Monomer. The cofactor is dipyrromethane.

The catalysed reaction is 4 porphobilinogen + H2O = hydroxymethylbilane + 4 NH4(+). Its pathway is porphyrin-containing compound metabolism; protoporphyrin-IX biosynthesis; coproporphyrinogen-III from 5-aminolevulinate: step 2/4. Its function is as follows. Tetrapolymerization of the monopyrrole PBG into the hydroxymethylbilane pre-uroporphyrinogen in several discrete steps. This chain is Porphobilinogen deaminase, found in Hamiltonella defensa subsp. Acyrthosiphon pisum (strain 5AT).